The following is a 418-amino-acid chain: Sterigmatocystin 8-O-methyltransferase (418 aa).

The propeptide occupies 1–41 (MTLPNKAALVGLAHTLSEQVKRYLVTADETKSPEDHKLCIE). 170-176 (MRSAAYF) contributes to the substrate binding site. The tract at residues 206-225 (LFDYYSTVDEVRGRRFDLGM) is substrate binding. S-adenosyl-L-methionine is bound by residues 254-255 (GG), Asp277, 297-298 (DI), and Arg313. His317 (proton acceptor) is an active-site residue.

It belongs to the class I-like SAM-binding methyltransferase superfamily. Cation-independent O-methyltransferase family. COMT subfamily.

The catalysed reaction is sterigmatocystin + S-adenosyl-L-methionine = 8-O-methylsterigmatocystin + S-adenosyl-L-homocysteine + H(+). It carries out the reaction dihydrosterigmatocystin + S-adenosyl-L-methionine = 8-O-methyldihydrosterigmatocystin + S-adenosyl-L-homocysteine + H(+). It functions in the pathway mycotoxin biosynthesis; aflatoxin biosynthesis. Functionally, involved in the conversion of sterigmatocystin to O-methylsterigmatocystin (OMST) and dihydrosterigmatocystin to dihydro-o-methylsterigmatocystin in the aflatoxin biosynthesis pathway. The sequence is that of Sterigmatocystin 8-O-methyltransferase (omtA) from Aspergillus flavus (strain ATCC 200026 / FGSC A1120 / IAM 13836 / NRRL 3357 / JCM 12722 / SRRC 167).